Reading from the N-terminus, the 279-residue chain is Large ribosomal subunit protein uL2 (279 aa).

2 stretches are compositionally biased toward basic residues: residues 211-221 (GRSRWRGKTPH) and 256-279 (SYGKKTRDKKKPSTKFIVRGRKGK). The disordered stretch occupies residues 211 to 279 (GRSRWRGKTP…KFIVRGRKGK (69 aa)).

This sequence belongs to the universal ribosomal protein uL2 family. In terms of assembly, part of the 50S ribosomal subunit. Forms a bridge to the 30S subunit in the 70S ribosome.

In terms of biological role, one of the primary rRNA binding proteins. Required for association of the 30S and 50S subunits to form the 70S ribosome, for tRNA binding and peptide bond formation. It has been suggested to have peptidyltransferase activity; this is somewhat controversial. Makes several contacts with the 16S rRNA in the 70S ribosome. The polypeptide is Large ribosomal subunit protein uL2 (Oenococcus oeni (strain ATCC BAA-331 / PSU-1)).